A 132-amino-acid chain; its full sequence is Small ribosomal subunit protein uS19 (132 aa).

The protein belongs to the universal ribosomal protein uS19 family.

Functionally, protein S19 forms a complex with S13 that binds strongly to the 16S ribosomal RNA. This Pyrococcus abyssi (strain GE5 / Orsay) protein is Small ribosomal subunit protein uS19 (rps19).